The primary structure comprises 452 residues: Bifunctional purine biosynthesis protein PurH (452 aa).

The region spanning 1–115 is the MGS-like domain; it reads MKRILVSLYE…KNWKKVKPAF (115 aa).

The protein belongs to the PurH family.

It carries out the reaction (6R)-10-formyltetrahydrofolate + 5-amino-1-(5-phospho-beta-D-ribosyl)imidazole-4-carboxamide = 5-formamido-1-(5-phospho-D-ribosyl)imidazole-4-carboxamide + (6S)-5,6,7,8-tetrahydrofolate. It catalyses the reaction IMP + H2O = 5-formamido-1-(5-phospho-D-ribosyl)imidazole-4-carboxamide. The protein operates within purine metabolism; IMP biosynthesis via de novo pathway; 5-formamido-1-(5-phospho-D-ribosyl)imidazole-4-carboxamide from 5-amino-1-(5-phospho-D-ribosyl)imidazole-4-carboxamide (10-formyl THF route): step 1/1. It participates in purine metabolism; IMP biosynthesis via de novo pathway; IMP from 5-formamido-1-(5-phospho-D-ribosyl)imidazole-4-carboxamide: step 1/1. The sequence is that of Bifunctional purine biosynthesis protein PurH from Thermotoga maritima (strain ATCC 43589 / DSM 3109 / JCM 10099 / NBRC 100826 / MSB8).